Reading from the N-terminus, the 625-residue chain is Chaperone protein HtpG (625 aa).

The a; substrate-binding stretch occupies residues 1–337 (MSTNQETRGF…TNDLPLNVSR (337 aa)). Residues 338–554 (EILQENKITA…NDEMTTQMAK (217 aa)) are b. The tract at residues 555–625 (LFAAMGQKAP…FIKRMNKLLG (71 aa)) is c.

The protein belongs to the heat shock protein 90 family. Homodimer.

The protein resides in the cytoplasm. Molecular chaperone. Has ATPase activity. The sequence is that of Chaperone protein HtpG from Actinobacillus pleuropneumoniae serotype 3 (strain JL03).